The chain runs to 294 residues: Fructose-bisphosphate aldolase class 1 (294 aa).

Glutamate 176 acts as the Proton acceptor in catalysis. Lysine 213 (schiff-base intermediate with dihydroxyacetone-P) is an active-site residue.

It belongs to the class I fructose-bisphosphate aldolase family.

It catalyses the reaction beta-D-fructose 1,6-bisphosphate = D-glyceraldehyde 3-phosphate + dihydroxyacetone phosphate. The protein operates within carbohydrate degradation; glycolysis; D-glyceraldehyde 3-phosphate and glycerone phosphate from D-glucose: step 4/4. This chain is Fructose-bisphosphate aldolase class 1, found in Oceanobacillus iheyensis (strain DSM 14371 / CIP 107618 / JCM 11309 / KCTC 3954 / HTE831).